A 406-amino-acid chain; its full sequence is MQYTEIMVRYGELSTKGHNKKSFIDRLGVNVRKALHSFDQVKVHAQRDRLHVELNGADYDQVMNRLKLVFGIQNFSPSIKVDKTFEATAEAAAQMIAEQVDKPITFKVETRRSDHQFAIDTFEMNNKLGGYLLDKFPDKLKVDVHHPDLTLRVEIRLNGIFLSSETIKGAGGLPVGTAGKGMMMMSGGIDSPVAAYLGMKRGVSMEMVHFFSPPYTSPQALAKAKQLTERLAKYSGSIKFIQVPFAEIQETVKEKVPEGYLMTIQRRMMLRLAAALMIKRHGLAIFNGESLGQVASQTMESMLAINDVTSYPVLRPVLSFDKTEIIKIAQDIDTYDLSILPYEDCCTVFTPPSPKTRPNVKRAREYEKRLDIEGLMQRALDGIEITEIHPGEDYLNQNEDVFAELL.

Residues 60-166 enclose the THUMP domain; the sequence is DQVMNRLKLV…LNGIFLSSET (107 aa). Residues 184-185, 209-210, arginine 266, glycine 288, and glutamine 297 each bind ATP; these read MM and HF.

It belongs to the ThiI family.

Its subcellular location is the cytoplasm. It catalyses the reaction [ThiI sulfur-carrier protein]-S-sulfanyl-L-cysteine + a uridine in tRNA + 2 reduced [2Fe-2S]-[ferredoxin] + ATP + H(+) = [ThiI sulfur-carrier protein]-L-cysteine + a 4-thiouridine in tRNA + 2 oxidized [2Fe-2S]-[ferredoxin] + AMP + diphosphate. The catalysed reaction is [ThiS sulfur-carrier protein]-C-terminal Gly-Gly-AMP + S-sulfanyl-L-cysteinyl-[cysteine desulfurase] + AH2 = [ThiS sulfur-carrier protein]-C-terminal-Gly-aminoethanethioate + L-cysteinyl-[cysteine desulfurase] + A + AMP + 2 H(+). The protein operates within cofactor biosynthesis; thiamine diphosphate biosynthesis. Catalyzes the ATP-dependent transfer of a sulfur to tRNA to produce 4-thiouridine in position 8 of tRNAs, which functions as a near-UV photosensor. Also catalyzes the transfer of sulfur to the sulfur carrier protein ThiS, forming ThiS-thiocarboxylate. This is a step in the synthesis of thiazole, in the thiamine biosynthesis pathway. The sulfur is donated as persulfide by IscS. In Limosilactobacillus reuteri subsp. reuteri (strain JCM 1112) (Lactobacillus reuteri), this protein is Probable tRNA sulfurtransferase.